A 693-amino-acid chain; its full sequence is Kinesin-like protein KIFC1 (693 aa).

Disordered stretches follow at residues 1–24 (MRGR…VRTT) and 48–156 (VKSS…KRPA). Low complexity-rich tracts occupy residues 49-59 (KSSSRLPLPGS) and 127-138 (QKPAPAAPAQKP). Serine 52 and serine 59 each carry phosphoserine. Residues 165–334 (DLHEELKQYR…QELKGNIRVF (170 aa)) are a coiled coil. A Kinesin motor domain is found at 330 to 683 (NIRVFCRVRP…LRFASKVNQC (354 aa)). Threonine 379 is modified (phosphothreonine). 430-437 (GQTGSGKT) contributes to the ATP binding site.

The protein belongs to the TRAFAC class myosin-kinesin ATPase superfamily. Kinesin family. NCD subfamily. In terms of assembly, binds NUBP1 and NUBP2. Interacts with PPP1R42.

Its subcellular location is the nucleus. It is found in the cytoplasm. It localises to the cytoskeleton. The protein resides in the microtubule organizing center. The protein localises to the centrosome. Its subcellular location is the spindle. It is found in the early endosome. Functionally, minus end-directed microtubule-dependent motor required for bipolar spindle formation. May contribute to movement of early endocytic vesicles. Regulates cilium formation and structure. The polypeptide is Kinesin-like protein KIFC1 (Rattus norvegicus (Rat)).